Consider the following 78-residue polypeptide: RNA-binding protein Hfq (78 aa).

In terms of domain architecture, Sm spans 10–69 (DPFLNALRKEHVPVSIYLVNGIKLQGHIESFDQYVVLLRNTVTQMVYKHAISTVVPARAV).

This sequence belongs to the Hfq family. As to quaternary structure, homohexamer.

Its function is as follows. RNA chaperone that binds small regulatory RNA (sRNAs) and mRNAs to facilitate mRNA translational regulation in response to envelope stress, environmental stress and changes in metabolite concentrations. Also binds with high specificity to tRNAs. The chain is RNA-binding protein Hfq from Herminiimonas arsenicoxydans.